Here is a 109-residue protein sequence, read N- to C-terminus: uncharacterized protein (109 aa).

Residues 1–25 form the signal peptide; it reads MKGIFLVVQLGFSIMVFLFLAAVNW. Residues 73–95 traverse the membrane as a helical segment; it reads YPVMSALMIISFLYVLAALFLLI.

The protein localises to the membrane. This is an uncharacterized protein from Bacillus subtilis (strain 168).